A 142-amino-acid chain; its full sequence is Large ribosomal subunit protein uL13 (142 aa).

It belongs to the universal ribosomal protein uL13 family. As to quaternary structure, part of the 50S ribosomal subunit.

In terms of biological role, this protein is one of the early assembly proteins of the 50S ribosomal subunit, although it is not seen to bind rRNA by itself. It is important during the early stages of 50S assembly. This chain is Large ribosomal subunit protein uL13, found in Erwinia tasmaniensis (strain DSM 17950 / CFBP 7177 / CIP 109463 / NCPPB 4357 / Et1/99).